Here is a 258-residue protein sequence, read N- to C-terminus: DNA-directed RNA polymerase subunit Rpo3 (258 aa).

The protein belongs to the archaeal Rpo3/eukaryotic RPB3 RNA polymerase subunit family. As to quaternary structure, part of the RNA polymerase complex.

The protein localises to the cytoplasm. The catalysed reaction is RNA(n) + a ribonucleoside 5'-triphosphate = RNA(n+1) + diphosphate. Functionally, DNA-dependent RNA polymerase (RNAP) catalyzes the transcription of DNA into RNA using the four ribonucleoside triphosphates as substrates. The chain is DNA-directed RNA polymerase subunit Rpo3 from Pyrobaculum calidifontis (strain DSM 21063 / JCM 11548 / VA1).